Reading from the N-terminus, the 134-residue chain is Interferon-induced transmembrane protein 5 (134 aa).

A compositionally biased stretch (basic and acidic residues) spans 1-20 (MDTSYPREDPRAPSSRKADA). Positions 1–31 (MDTSYPREDPRAPSSRKADAAAHTALSMGTP) are disordered. Residues 1 to 39 (MDTSYPREDPRAPSSRKADAAAHTALSMGTPGPTPRDHM) are Extracellular-facing. A helical membrane pass occupies residues 40–60 (LWSVFSTMYLNLCCLGFLALV). S-palmitoyl cysteine attachment occurs at residues Cys52, Cys53, and Cys86. Topologically, residues 61-88 (HSVKARDQKMAGNLEAARQYGSKAKCYN) are cytoplasmic. Residues 89–109 (ILAAMWTLVPPLLLLGLVVTG) form a helical membrane-spanning segment. Residues 110–134 (ALHLSKLAKDSAAFFSTKFDEEDYN) are Extracellular-facing.

This sequence belongs to the CD225/Dispanin family. In terms of assembly, interacts with FKBP11. In terms of processing, palmitoylated. As to expression, detected in embryonic bone (at protein level). Highly expressed in osteoblasts of adults and embryos. Expressed in primitive hemopoietic cells.

It is found in the cell membrane. Required for normal bone mineralization. The protein is Interferon-induced transmembrane protein 5 (Ifitm5) of Mus musculus (Mouse).